A 237-amino-acid polypeptide reads, in one-letter code: Uridylate kinase (237 aa).

12 to 15 (KLSG) provides a ligand contact to ATP. Residues 20–25 (GDEGFG) are involved in allosteric activation by GTP. Gly-54 is a UMP binding site. Residues Gly-55 and Arg-59 each contribute to the ATP site. UMP is bound by residues Asp-74 and 135–142 (TGSPFFTT). Positions 162, 168, and 171 each coordinate ATP.

This sequence belongs to the UMP kinase family. In terms of assembly, homohexamer.

It is found in the cytoplasm. The catalysed reaction is UMP + ATP = UDP + ADP. Its pathway is pyrimidine metabolism; CTP biosynthesis via de novo pathway; UDP from UMP (UMPK route): step 1/1. Allosterically activated by GTP. Inhibited by UTP. In terms of biological role, catalyzes the reversible phosphorylation of UMP to UDP. This is Uridylate kinase from Haemophilus ducreyi (strain 35000HP / ATCC 700724).